We begin with the raw amino-acid sequence, 498 residues long: ATP synthase subunit beta, chloroplastic (498 aa).

172 to 179 is an ATP binding site; that stretch reads GGAGVGKT.

Belongs to the ATPase alpha/beta chains family. F-type ATPases have 2 components, CF(1) - the catalytic core - and CF(0) - the membrane proton channel. CF(1) has five subunits: alpha(3), beta(3), gamma(1), delta(1), epsilon(1). CF(0) has four main subunits: a(1), b(1), b'(1) and c(9-12).

Its subcellular location is the plastid. It is found in the chloroplast thylakoid membrane. The enzyme catalyses ATP + H2O + 4 H(+)(in) = ADP + phosphate + 5 H(+)(out). Its function is as follows. Produces ATP from ADP in the presence of a proton gradient across the membrane. The catalytic sites are hosted primarily by the beta subunits. In Saccharum hybrid (Sugarcane), this protein is ATP synthase subunit beta, chloroplastic.